Reading from the N-terminus, the 91-residue chain is RNA-binding protein Hfq (91 aa).

The region spanning Asp-9–Val-69 is the Sm domain.

The protein belongs to the Hfq family. As to quaternary structure, homohexamer.

Its function is as follows. RNA chaperone that binds small regulatory RNA (sRNAs) and mRNAs to facilitate mRNA translational regulation in response to envelope stress, environmental stress and changes in metabolite concentrations. Also binds with high specificity to tRNAs. In Pseudothermotoga lettingae (strain ATCC BAA-301 / DSM 14385 / NBRC 107922 / TMO) (Thermotoga lettingae), this protein is RNA-binding protein Hfq.